A 572-amino-acid polypeptide reads, in one-letter code: Thiamine biosynthesis protein THI22 (572 aa).

Positions 1–19 are cleaved as a signal peptide; sequence MVIILLGLCTLGFPRTAFC.

This sequence belongs to the thiaminase-2 family.

The protein localises to the secreted. Is not required for thiamine biosynthesis. The chain is Thiamine biosynthesis protein THI22 (THI22) from Saccharomyces cerevisiae (strain ATCC 204508 / S288c) (Baker's yeast).